A 940-amino-acid chain; its full sequence is Beta-mannosidase A (940 aa).

The signal sequence occupies residues 1-21 (MHFHGIATQAVLASNITTGSG). N-linked (GlcNAc...) asparagine glycosylation is found at Asn15, Asn39, Asn79, Asn245, Asn314, Asn321, and Asn344. Glu476 (proton donor) is an active-site residue. 7 N-linked (GlcNAc...) asparagine glycosylation sites follow: Asn534, Asn605, Asn626, Asn653, Asn733, Asn761, and Asn785.

It belongs to the glycosyl hydrolase 2 family. Beta-mannosidase A subfamily. In terms of assembly, homodimer.

Its subcellular location is the secreted. The catalysed reaction is Hydrolysis of terminal, non-reducing beta-D-mannose residues in beta-D-mannosides.. It participates in glycan metabolism; N-glycan degradation. Functionally, exoglycosidase that cleaves the single beta-linked mannose residue from the non-reducing end of beta-mannosidic oligosaccharides of various complexity and length. Involved in the degradation of polymeric mannan and galactomannan. The polypeptide is Beta-mannosidase A (mndA) (Emericella nidulans (strain FGSC A4 / ATCC 38163 / CBS 112.46 / NRRL 194 / M139) (Aspergillus nidulans)).